A 282-amino-acid chain; its full sequence is Pantothenate synthetase (282 aa).

ATP is bound at residue 28-35; it reads MGALHSGH. The Proton donor role is filled by H35. (R)-pantoate is bound at residue Q59. Q59 serves as a coordination point for beta-alanine. 146 to 149 serves as a coordination point for ATP; the sequence is GEKD. Residue Q152 participates in (R)-pantoate binding. Residues V175 and 183-186 contribute to the ATP site; that span reads LSSR.

Belongs to the pantothenate synthetase family. As to quaternary structure, homodimer.

The protein resides in the cytoplasm. The catalysed reaction is (R)-pantoate + beta-alanine + ATP = (R)-pantothenate + AMP + diphosphate + H(+). It functions in the pathway cofactor biosynthesis; (R)-pantothenate biosynthesis; (R)-pantothenate from (R)-pantoate and beta-alanine: step 1/1. Catalyzes the condensation of pantoate with beta-alanine in an ATP-dependent reaction via a pantoyl-adenylate intermediate. The polypeptide is Pantothenate synthetase (Salinispora arenicola (strain CNS-205)).